Reading from the N-terminus, the 1901-residue chain is Methylcytosine dioxygenase tet3 (1901 aa).

The CXXC-type zinc-finger motif lies at 58 to 99 (SNKKRKRCGVCVPCLRKEPCGACYNCVNRSTSHQICKMRKCE). The Zn(2+) site is built by C65, C68, C71, C77, C80, C83, C93, and C98. Disordered regions lie at residues 434-455 (KNAL…KKSS), 602-658 (WWVP…EGSA), 751-787 (KDQC…QNDL), and 808-867 (DFSL…PVSR). 2 stretches are compositionally biased toward polar residues: residues 442–455 (SPRQ…KKSS) and 602–614 (WWVP…PVSK). A compositionally biased stretch (basic residues) spans 640-652 (KPQRKQVQIKKPK). A compositionally biased stretch (low complexity) spans 758–771 (STHDTSSSSGQGDS). The segment covering 847–867 (ENSTKPATHSNPALSNNPVSR) has biased composition (polar residues). Zn(2+) is bound by residues C957, C959, C1017, H1043, and C1045. R1085 is a binding site for 2-oxoglutarate. Zn(2+) contacts are provided by C1095, C1097, C1113, C1122, and C1182. Residue C1198 participates in 2-oxoglutarate binding. Residue H1204 participates in Zn(2+) binding. The Fe cation site is built by H1206 and D1208. H1240 is a 2-oxoglutarate binding site. Disordered stretches follow at residues 1282-1338 (SEPA…QQTK), 1457-1501 (YGSE…VETT), 1591-1624 (SNAP…PGKV), and 1680-1745 (SATP…DEEI). Residues 1291–1325 (RQLEAKKAAAEKKKLQKEKLVSPDKTKQEPSDKKT) are compositionally biased toward basic and acidic residues. Residues 1326 to 1338 (CQQNPGVPQQQTK) are compositionally biased toward polar residues. The segment covering 1465–1474 (SFRRSSEVPH) has biased composition (basic and acidic residues). The span at 1477-1487 (SLQNPSSQKSV) shows a compositional bias: polar residues. 2 stretches are compositionally biased toward polar residues: residues 1680–1693 (SATP…TPCS) and 1702–1719 (SFPN…SQNH). A Fe cation-binding site is contributed by H1780. A 2-oxoglutarate-binding site is contributed by 1795–1797 (RIS).

This sequence belongs to the TET family. Fe(2+) is required as a cofactor. Requires Zn(2+) as cofactor.

The protein resides in the nucleus. It is found in the chromosome. It catalyses the reaction a 5-methyl-2'-deoxycytidine in DNA + 2-oxoglutarate + O2 = a 5-hydroxymethyl-2'-deoxycytidine in DNA + succinate + CO2. The catalysed reaction is a 5-hydroxymethyl-2'-deoxycytidine in DNA + 2-oxoglutarate + O2 = a 5-formyl-2'-deoxycytidine in DNA + succinate + CO2 + H2O. It carries out the reaction a 5-formyl-2'-deoxycytidine in DNA + 2-oxoglutarate + O2 = a 5-carboxyl-2'-deoxycytidine in DNA + succinate + CO2 + H(+). Dioxygenase that catalyzes the conversion of the modified genomic base 5-methylcytosine (5mC) into 5-hydroxymethylcytosine (5hmC) and plays a key role in epigenetic chromatin reprogramming during embryonic development. Conversion of 5mC into 5hmC probably constitutes the first step in cytosine demethylation. Selectively binds to the promoter region of target genes and contributes to regulate the expression of numerous developmental genes, including pax6, rax, sox9 and six3. May also contribute to the regulation of target genes in ways that do not require its enzyme activity. The protein is Methylcytosine dioxygenase tet3 of Xenopus tropicalis (Western clawed frog).